We begin with the raw amino-acid sequence, 162 residues long: Meiosis-specific protein HED1 (162 aa).

The segment at 67-124 (KNLSENTGGGSPNGGAYLDAKKGVREQDQYQGGPSKELDRLQPPPSMKKSPPRKKKSL) is disordered. Positions 85–94 (DAKKGVREQD) are enriched in basic and acidic residues.

In terms of assembly, interacts with RAD51.

The protein resides in the nucleus. The protein localises to the chromosome. Involved in regulation of meiotic recombination and repair of DNA damage. Inhibits RAD51-mediated recombination when the meiotic recombination machinery is impaired. This Saccharomyces cerevisiae (strain ATCC 204508 / S288c) (Baker's yeast) protein is Meiosis-specific protein HED1 (HED1).